The chain runs to 565 residues: Beta-hexosaminidase subunit beta (565 aa).

Positions 1 to 13 (MIVLLLLISYCFA) are cleaved as a signal peptide. The N-linked (GlcNAc...) asparagine glycan is linked to N71. Residue E347 is the Proton donor of the active site.

This sequence belongs to the glycosyl hydrolase 20 family. In terms of assembly, heterodimer of one alpha subunit and one beta subunit. Glycosylated.

It localises to the cytoplasmic granule. It is found in the secreted. It catalyses the reaction Hydrolysis of terminal non-reducing N-acetyl-D-hexosamine residues in N-acetyl-beta-D-hexosaminides.. Its function is as follows. Hydrolyzes the non-reducing end N-acetyl-D-hexosamine and/or sulfated N-acetyl-D-hexosamine of glycoconjugates. May contribute to amoebic pathogenicity and may be involved in the destruction of extracellular matrix components. The protein is Beta-hexosaminidase subunit beta of Entamoeba histolytica (strain ATCC 30459 / HM-1:IMSS / ABRM).